The primary structure comprises 725 residues: Catalase-peroxidase (725 aa).

Residues 90 to 213 constitute a cross-link (tryptophyl-tyrosyl-methioninium (Trp-Tyr) (with M-239)); that stretch reads WHSAGTYRTG…LAAVQMGLIY (124 aa). H91 acts as the Proton acceptor in catalysis. Positions 213–239 form a cross-link, tryptophyl-tyrosyl-methioninium (Tyr-Met) (with W-90); it reads YVNPEGPNGNPDPVAAAKDIRETFARM. Residue H254 coordinates heme b.

The protein belongs to the peroxidase family. Peroxidase/catalase subfamily. In terms of assembly, homodimer or homotetramer. The cofactor is heme b. In terms of processing, formation of the three residue Trp-Tyr-Met cross-link is important for the catalase, but not the peroxidase activity of the enzyme.

It carries out the reaction H2O2 + AH2 = A + 2 H2O. The enzyme catalyses 2 H2O2 = O2 + 2 H2O. Bifunctional enzyme with both catalase and broad-spectrum peroxidase activity. The chain is Catalase-peroxidase from Hahella chejuensis (strain KCTC 2396).